Here is a 144-residue protein sequence, read N- to C-terminus: Galectin a (144 aa).

In terms of domain architecture, Galectin spans 1 to 138 (DHIDLEFDVG…DAVLRKLCVV (138 aa)).

Tetramer.

Functionally, lectin that binds beta-galactoside and a wide array of complex carbohydrates. The protein is Galectin a of Aplysina lactuca (Marine sponge).